A 326-amino-acid polypeptide reads, in one-letter code: Beta-ketoacyl-[acyl-carrier-protein] synthase III (326 aa).

Catalysis depends on residues Cys-115 and His-253. Residues 254 to 258 (QANKR) are ACP-binding. Residue Asn-283 is part of the active site.

Belongs to the thiolase-like superfamily. FabH family. In terms of assembly, homodimer.

The protein resides in the cytoplasm. It carries out the reaction malonyl-[ACP] + acetyl-CoA + H(+) = 3-oxobutanoyl-[ACP] + CO2 + CoA. It functions in the pathway lipid metabolism; fatty acid biosynthesis. In terms of biological role, catalyzes the condensation reaction of fatty acid synthesis by the addition to an acyl acceptor of two carbons from malonyl-ACP. Catalyzes the first condensation reaction which initiates fatty acid synthesis and may therefore play a role in governing the total rate of fatty acid production. Possesses both acetoacetyl-ACP synthase and acetyl transacylase activities. Its substrate specificity determines the biosynthesis of branched-chain and/or straight-chain of fatty acids. This Bradyrhizobium diazoefficiens (strain JCM 10833 / BCRC 13528 / IAM 13628 / NBRC 14792 / USDA 110) protein is Beta-ketoacyl-[acyl-carrier-protein] synthase III.